A 263-amino-acid chain; its full sequence is Hydroxyethylthiazole kinase 1 (263 aa).

A substrate-binding site is contributed by Met-42. ATP-binding residues include Lys-118 and Thr-164. Substrate is bound at residue Gly-191.

It belongs to the Thz kinase family. The cofactor is Mg(2+).

The catalysed reaction is 5-(2-hydroxyethyl)-4-methylthiazole + ATP = 4-methyl-5-(2-phosphooxyethyl)-thiazole + ADP + H(+). It participates in cofactor biosynthesis; thiamine diphosphate biosynthesis; 4-methyl-5-(2-phosphoethyl)-thiazole from 5-(2-hydroxyethyl)-4-methylthiazole: step 1/1. Its function is as follows. Catalyzes the phosphorylation of the hydroxyl group of 4-methyl-5-beta-hydroxyethylthiazole (THZ). This chain is Hydroxyethylthiazole kinase 1, found in Clostridium botulinum (strain Langeland / NCTC 10281 / Type F).